Here is a 563-residue protein sequence, read N- to C-terminus: Putative GMC-type oxidoreductase L128 (563 aa).

Residues 1 to 21 (MTSSIVLKFFLIATLLVIANS) form the signal peptide. 48–77 (DYVIVGGGAAGSVLLDKCISYGYKCTLIER) provides a ligand contact to FAD. The active-site Proton acceptor is the histidine 504.

It belongs to the GMC oxidoreductase family. FAD serves as cofactor.

The protein is Putative GMC-type oxidoreductase L128 of Acanthamoeba polyphaga mimivirus (APMV).